A 432-amino-acid polypeptide reads, in one-letter code: Amino-acid acetyltransferase (432 aa).

In terms of domain architecture, N-acetyltransferase spans 286 to 425 (EKLREATIED…ASLYNYQRQS (140 aa)).

The protein belongs to the acetyltransferase family. ArgA subfamily.

The protein localises to the cytoplasm. The catalysed reaction is L-glutamate + acetyl-CoA = N-acetyl-L-glutamate + CoA + H(+). It functions in the pathway amino-acid biosynthesis; L-arginine biosynthesis; N(2)-acetyl-L-ornithine from L-glutamate: step 1/4. This Azotobacter vinelandii (strain DJ / ATCC BAA-1303) protein is Amino-acid acetyltransferase.